Reading from the N-terminus, the 494-residue chain is Zinc metalloproteinase/disintegrin (494 aa).

The N-terminal stretch at 1–20 (MIQVLLVTICLAVFPFQGSS) is a signal peptide. Residues 21 to 193 (KTLKSGNVND…KKASHLVATS (173 aa)) constitute a propeptide that is removed on maturation. In terms of domain architecture, Peptidase M12B spans 201 to 396 (RYVQLVIVAD…HNPPCILNQA (196 aa)). Disulfide bonds link Cys311–Cys391, Cys351–Cys375, and Cys353–Cys358. Position 336 (His336) interacts with Zn(2+). Residue Glu337 is part of the active site. The Zn(2+) site is built by His340 and His346. Residues 410–431 (ELLQNSVNPCYDPVTCQPKEKE) constitute a propeptide that is removed on maturation. The Disintegrin domain maps to 417-478 (NPCYDPVTCQ…DCPRNPYKGE (62 aa)). Disulfide bonds link Cys433-Cys442, Cys438-Cys463, Cys439-Cys468, and Cys451-Cys470. The Cell attachment site signature appears at 455–457 (RGD). A propeptide spanning residues 482–494 (MEWPAPAKGSVLM) is cleaved from the precursor.

This sequence belongs to the venom metalloproteinase (M12B) family. P-II subfamily. P-IIa sub-subfamily. In terms of assembly, monomer (disintegrin). In terms of tissue distribution, expressed by the venom gland.

Its subcellular location is the secreted. In terms of biological role, impairs hemostasis in the envenomed animal. Inhibits ADP-induced platelet aggregation (IC(50)=168 nM). Inhibits alpha-5/beta-1 (ITGA5/ITGB1) integrin and induces the expression of a ligand-induced binding site epitope on beta-1 integrin subunit. Has a direct chemotactic stimulus on human neutrophils in vitro. This Echis ocellatus (Ocellated saw-scaled viper) protein is Zinc metalloproteinase/disintegrin.